The chain runs to 148 residues: Flavodoxin (148 aa).

In terms of domain architecture, Flavodoxin-like spans 4–145; sequence ALIVYGSTTG…DIVGWAHDVR (142 aa).

This sequence belongs to the flavodoxin family. FMN is required as a cofactor.

In terms of biological role, low-potential electron donor to a number of redox enzymes. The sequence is that of Flavodoxin from Nitratidesulfovibrio vulgaris (strain ATCC 29579 / DSM 644 / CCUG 34227 / NCIMB 8303 / VKM B-1760 / Hildenborough) (Desulfovibrio vulgaris).